A 172-amino-acid chain; its full sequence is C-phycocyanin beta subunit (172 aa).

Position 72 is an N4-methylasparagine (Asn-72). Residues Cys-82 and Cys-153 each coordinate (2R,3E)-phycocyanobilin.

Belongs to the phycobiliprotein family. As to quaternary structure, heterodimer of an alpha and a beta chain, which further assembles into trimers. The trimers assemble into hexamers, although these were not seen in the crystallographic studies. Part of 2 PBS rod complexes, the conventional CpcG-PBS rod and a photosystem I-specific CpcL-PBS rod, both of which include ferredoxin--NADP reductase (petH). Interacts with rod linker CpcC2 via the latter's N-terminal PBS-linker domain. Post-translationally, contains two covalently linked bilin chromophores.

The protein resides in the cellular thylakoid membrane. In terms of biological role, light-harvesting photosynthetic bile pigment-protein from the phycobiliprotein complex (phycobilisome, PBS). Phycocyanin is the major phycobiliprotein in the PBS rod. The sequence is that of C-phycocyanin beta subunit (cpcB) from Synechocystis sp. (strain ATCC 27184 / PCC 6803 / Kazusa).